Reading from the N-terminus, the 390-residue chain is Coenzyme A biosynthesis bifunctional protein CoaBC (390 aa).

The segment at 1-188 (MDKNKHILIG…NQKDYLKNKK (188 aa)) is phosphopantothenoylcysteine decarboxylase. The Proton donor role is filled by cysteine 156. The tract at residues 189-390 (ILITASRTEE…VAKEILKILY (202 aa)) is phosphopantothenate--cysteine ligase. CTP-binding positions include aspartate 277, lysine 287, 304–307 (PDII), phenylalanine 323, lysine 338, and lysine 342.

This sequence in the N-terminal section; belongs to the HFCD (homo-oligomeric flavin containing Cys decarboxylase) superfamily. In the C-terminal section; belongs to the PPC synthetase family. Mg(2+) is required as a cofactor. Requires FMN as cofactor.

It catalyses the reaction N-[(R)-4-phosphopantothenoyl]-L-cysteine + H(+) = (R)-4'-phosphopantetheine + CO2. The catalysed reaction is (R)-4'-phosphopantothenate + L-cysteine + CTP = N-[(R)-4-phosphopantothenoyl]-L-cysteine + CMP + diphosphate + H(+). It functions in the pathway cofactor biosynthesis; coenzyme A biosynthesis; CoA from (R)-pantothenate: step 2/5. Its pathway is cofactor biosynthesis; coenzyme A biosynthesis; CoA from (R)-pantothenate: step 3/5. In terms of biological role, catalyzes two sequential steps in the biosynthesis of coenzyme A. In the first step cysteine is conjugated to 4'-phosphopantothenate to form 4-phosphopantothenoylcysteine. In the second step the latter compound is decarboxylated to form 4'-phosphopantotheine. The protein is Coenzyme A biosynthesis bifunctional protein CoaBC of Borreliella burgdorferi (strain ATCC 35210 / DSM 4680 / CIP 102532 / B31) (Borrelia burgdorferi).